A 206-amino-acid polypeptide reads, in one-letter code: N-(5'-phosphoribosyl)anthranilate isomerase (206 aa).

It belongs to the TrpF family.

The catalysed reaction is N-(5-phospho-beta-D-ribosyl)anthranilate = 1-(2-carboxyphenylamino)-1-deoxy-D-ribulose 5-phosphate. Its pathway is amino-acid biosynthesis; L-tryptophan biosynthesis; L-tryptophan from chorismate: step 3/5. The polypeptide is N-(5'-phosphoribosyl)anthranilate isomerase (Pseudomonas syringae pv. syringae (strain B728a)).